A 343-amino-acid chain; its full sequence is Dihydroorotate dehydrogenase (quinone) (343 aa).

FMN contacts are provided by residues 61-65 and threonine 85; that span reads AGLDK. Lysine 65 is a binding site for substrate. Substrate is bound at residue 110-114; the sequence is NRMGF. 2 residues coordinate FMN: asparagine 138 and asparagine 171. Asparagine 171 provides a ligand contact to substrate. Catalysis depends on serine 174, which acts as the Nucleophile. A substrate-binding site is contributed by asparagine 176. The FMN site is built by lysine 216 and threonine 244. Residue 245–246 coordinates substrate; that stretch reads NT. FMN contacts are provided by residues glycine 267, glycine 296, and 317–318; that span reads YS.

This sequence belongs to the dihydroorotate dehydrogenase family. Type 2 subfamily. Monomer. Requires FMN as cofactor.

It localises to the cell membrane. The catalysed reaction is (S)-dihydroorotate + a quinone = orotate + a quinol. The protein operates within pyrimidine metabolism; UMP biosynthesis via de novo pathway; orotate from (S)-dihydroorotate (quinone route): step 1/1. In terms of biological role, catalyzes the conversion of dihydroorotate to orotate with quinone as electron acceptor. This Pseudomonas savastanoi pv. phaseolicola (strain 1448A / Race 6) (Pseudomonas syringae pv. phaseolicola (strain 1448A / Race 6)) protein is Dihydroorotate dehydrogenase (quinone).